A 239-amino-acid polypeptide reads, in one-letter code: Small ribosomal subunit protein eS4 (239 aa).

An S4 RNA-binding domain is found at 37 to 99 (IPLAVVIRDY…ADLYFRVIPD (63 aa)).

This sequence belongs to the eukaryotic ribosomal protein eS4 family.

The polypeptide is Small ribosomal subunit protein eS4 (Saccharolobus islandicus (strain Y.N.15.51 / Yellowstone #2) (Sulfolobus islandicus)).